Here is a 147-residue protein sequence, read N- to C-terminus: Transcriptional regulator MraZ (147 aa).

2 consecutive SpoVT-AbrB domains span residues 5 to 47 (QQLR…SEKE) and 76 to 123 (TFEI…SKSK).

The protein belongs to the MraZ family. As to quaternary structure, forms oligomers.

The protein resides in the cytoplasm. The protein localises to the nucleoid. This Mycoplasmopsis synoviae (strain 53) (Mycoplasma synoviae) protein is Transcriptional regulator MraZ.